A 94-amino-acid polypeptide reads, in one-letter code: Large ribosomal subunit protein eL42 (94 aa).

4 residues coordinate Zn(2+): C11, C14, C71, and C74. The C4-type zinc-finger motif lies at 11 to 74; that stretch reads CPYCKRHTIH…LDLRFVCTVC (64 aa).

This sequence belongs to the eukaryotic ribosomal protein eL42 family. As to quaternary structure, part of the 50S ribosomal subunit. Zn(2+) is required as a cofactor.

Functionally, binds to the 23S rRNA. The chain is Large ribosomal subunit protein eL42 from Pyrococcus horikoshii (strain ATCC 700860 / DSM 12428 / JCM 9974 / NBRC 100139 / OT-3).